Here is a 208-residue protein sequence, read N- to C-terminus: UPF0711 protein C18orf21 homolog (208 aa).

Residues 123–137 show a composition bias toward basic residues; sequence SKHKSTPGSASKHRT. Disordered regions lie at residues 123-180 and 189-208; these read SKHK…KSSP and MLENKQQGKKGGLKDFLSSL. Polar residues predominate over residues 138–152; that stretch reads PQTVNWATPKSVANR. Low complexity predominate over residues 153–180; that stretch reads TPSSTPRSASSNTSSSSSSKSSSVKSSP.

The protein belongs to the UPF0711 family.

The protein is UPF0711 protein C18orf21 homolog of Danio rerio (Zebrafish).